A 174-amino-acid polypeptide reads, in one-letter code: uncharacterized protein (174 aa).

A helical membrane pass occupies residues 126–146 (AIDEFIITVIPVVLGSGIPLF).

It to B.subtilis YyaP.

The protein resides in the membrane. This is an uncharacterized protein from Bacillus subtilis (strain 168).